The following is a 254-amino-acid chain: Phosphatidylglycerol--prolipoprotein diacylglyceryl transferase (254 aa).

A run of 3 helical transmembrane segments spans residues 11 to 31, 49 to 69, and 84 to 104; these read LAIR…LLLA, FLIA…IFEF, and QGGL…YIYL. Arg-130 provides a ligand contact to a 1,2-diacyl-sn-glycero-3-phospho-(1'-sn-glycerol). A run of 3 helical transmembrane segments spans residues 169–189, 196–216, and 228–248; these read PTFL…VYLL, GIVF…IEGL, and VAQL…YNII.

Belongs to the Lgt family.

It is found in the cell membrane. It carries out the reaction L-cysteinyl-[prolipoprotein] + a 1,2-diacyl-sn-glycero-3-phospho-(1'-sn-glycerol) = an S-1,2-diacyl-sn-glyceryl-L-cysteinyl-[prolipoprotein] + sn-glycerol 1-phosphate + H(+). It participates in protein modification; lipoprotein biosynthesis (diacylglyceryl transfer). In terms of biological role, catalyzes the transfer of the diacylglyceryl group from phosphatidylglycerol to the sulfhydryl group of the N-terminal cysteine of a prolipoprotein, the first step in the formation of mature lipoproteins. This Clostridium botulinum (strain Loch Maree / Type A3) protein is Phosphatidylglycerol--prolipoprotein diacylglyceryl transferase.